The chain runs to 509 residues: Maturase K (509 aa).

It belongs to the intron maturase 2 family. MatK subfamily.

Its subcellular location is the plastid. It localises to the chloroplast. Its function is as follows. Usually encoded in the trnK tRNA gene intron. Probably assists in splicing its own and other chloroplast group II introns. The chain is Maturase K from Portulaca oleracea (Common purslane).